The chain runs to 687 residues: Probable ATP-dependent RNA helicase Dbp73D (687 aa).

Disordered stretches follow at residues 1-26 (MELFTVNRYTEDLKEQKDGAQGTNNE) and 52-87 (TPILEKETSDVKESESKEEQVEEPEKPLEVVQEEDV). 2 stretches are compositionally biased toward basic and acidic residues: residues 9 to 18 (YTEDLKEQKD) and 54 to 79 (ILEKETSDVKESESKEEQVEEPEKPL). Residues 160–168 (LFPVQKQVI) carry the Q motif motif. The Helicase ATP-binding domain occupies 177 to 381 (KPPPFRPRDI…DLRLFQPRLF (205 aa)). Residue 190–197 (APTGSGKT) coordinates ATP. A DEAD box motif is present at residues 305-308 (DEAD). Positions 434–583 (TVFALVEKYK…EIHVSPDIEI (150 aa)) constitute a Helicase C-terminal domain. The tract at residues 646–675 (IVQSSKKSSETKNSKTKADKTKYQPKETKK) is disordered. Over residues 652-675 (KSSETKNSKTKADKTKYQPKETKK) the composition is skewed to basic and acidic residues.

The protein belongs to the DEAD box helicase family. DDX51/DBP6 subfamily. Expressed in the germline tissue of the ovary.

It is found in the nucleus. Its subcellular location is the nucleolus. It catalyses the reaction ATP + H2O = ADP + phosphate + H(+). ATP-binding RNA helicase involved in the biogenesis of 60S ribosomal subunits. In Drosophila melanogaster (Fruit fly), this protein is Probable ATP-dependent RNA helicase Dbp73D (Dbp73D).